Consider the following 153-residue polypeptide: Flagellar assembly factor FliW (153 aa).

This sequence belongs to the FliW family. In terms of assembly, interacts with translational regulator CsrA and flagellin(s).

It localises to the cytoplasm. Acts as an anti-CsrA protein, binds CsrA and prevents it from repressing translation of its target genes, one of which is flagellin. Binds to flagellin and participates in the assembly of the flagellum. This chain is Flagellar assembly factor FliW, found in Heliobacterium modesticaldum (strain ATCC 51547 / Ice1).